Here is a 346-residue protein sequence, read N- to C-terminus: Flap endonuclease 1 (346 aa).

The N-domain stretch occupies residues 1–102 (MGVTELGKLI…AEIEERRKVK (102 aa)). Mg(2+) contacts are provided by aspartate 31, aspartate 84, glutamate 156, glutamate 158, aspartate 177, aspartate 179, and aspartate 239. The tract at residues 120 to 261 (DVAKYMKRAV…KALKLVWEFG (142 aa)) is I-domain.

Belongs to the XPG/RAD2 endonuclease family. FEN1 subfamily. In terms of assembly, interacts with PCNA. PCNA stimulates the nuclease activity without altering cleavage specificity. The cofactor is Mg(2+).

Structure-specific nuclease with 5'-flap endonuclease and 5'-3' exonuclease activities involved in DNA replication and repair. During DNA replication, cleaves the 5'-overhanging flap structure that is generated by displacement synthesis when DNA polymerase encounters the 5'-end of a downstream Okazaki fragment. Binds the unpaired 3'-DNA end and kinks the DNA to facilitate 5' cleavage specificity. Cleaves one nucleotide into the double-stranded DNA from the junction in flap DNA, leaving a nick for ligation. Also involved in the base excision repair (BER) pathway. Acts as a genome stabilization factor that prevents flaps from equilibrating into structures that lead to duplications and deletions. Also possesses 5'-3' exonuclease activity on nicked or gapped double-stranded DNA. In Pyrobaculum islandicum (strain DSM 4184 / JCM 9189 / GEO3), this protein is Flap endonuclease 1.